The following is a 459-amino-acid chain: Bifunctional protein GlmU (459 aa).

The interval 1–230 (MTTRNTIILA…FDESMGVNDR (230 aa)) is pyrophosphorylase. Residues 9 to 12 (LAAG), K23, Q73, 78 to 79 (GT), 101 to 103 (SGD), G140, E155, N170, and N228 each bind UDP-N-acetyl-alpha-D-glucosamine. Position 103 (D103) interacts with Mg(2+). Position 228 (N228) interacts with Mg(2+). The segment at 231-251 (VALSAATKIMRDRINEAHMRD) is linker. The tract at residues 252–459 (GVTLIDPATT…YQKLPYRGED (208 aa)) is N-acetyltransferase. Residues R333 and K351 each contribute to the UDP-N-acetyl-alpha-D-glucosamine site. The active-site Proton acceptor is the H363. Residues Y366 and N377 each contribute to the UDP-N-acetyl-alpha-D-glucosamine site. Residues 386–387 (NY), S405, A423, and R440 each bind acetyl-CoA.

It in the N-terminal section; belongs to the N-acetylglucosamine-1-phosphate uridyltransferase family. The protein in the C-terminal section; belongs to the transferase hexapeptide repeat family. As to quaternary structure, homotrimer. The cofactor is Mg(2+).

It localises to the cytoplasm. It catalyses the reaction alpha-D-glucosamine 1-phosphate + acetyl-CoA = N-acetyl-alpha-D-glucosamine 1-phosphate + CoA + H(+). The catalysed reaction is N-acetyl-alpha-D-glucosamine 1-phosphate + UTP + H(+) = UDP-N-acetyl-alpha-D-glucosamine + diphosphate. Its pathway is nucleotide-sugar biosynthesis; UDP-N-acetyl-alpha-D-glucosamine biosynthesis; N-acetyl-alpha-D-glucosamine 1-phosphate from alpha-D-glucosamine 6-phosphate (route II): step 2/2. It functions in the pathway nucleotide-sugar biosynthesis; UDP-N-acetyl-alpha-D-glucosamine biosynthesis; UDP-N-acetyl-alpha-D-glucosamine from N-acetyl-alpha-D-glucosamine 1-phosphate: step 1/1. The protein operates within bacterial outer membrane biogenesis; LPS lipid A biosynthesis. In terms of biological role, catalyzes the last two sequential reactions in the de novo biosynthetic pathway for UDP-N-acetylglucosamine (UDP-GlcNAc). The C-terminal domain catalyzes the transfer of acetyl group from acetyl coenzyme A to glucosamine-1-phosphate (GlcN-1-P) to produce N-acetylglucosamine-1-phosphate (GlcNAc-1-P), which is converted into UDP-GlcNAc by the transfer of uridine 5-monophosphate (from uridine 5-triphosphate), a reaction catalyzed by the N-terminal domain. The polypeptide is Bifunctional protein GlmU (Levilactobacillus brevis (strain ATCC 367 / BCRC 12310 / CIP 105137 / JCM 1170 / LMG 11437 / NCIMB 947 / NCTC 947) (Lactobacillus brevis)).